A 495-amino-acid chain; its full sequence is uncharacterized protein (495 aa).

FAD-binding residues include Ser-16, Glu-36, Trp-45, Asp-56, Tyr-62, and Val-105.

It belongs to the FAD-binding monooxygenase family. FAD is required as a cofactor.

This is an uncharacterized protein from Mycobacterium tuberculosis (strain CDC 1551 / Oshkosh).